We begin with the raw amino-acid sequence, 178 residues long: MVAMPTAWCSIALALLLALHEGKGQVAAAPDQPAPSHRARASHLRPRRCSCSSWLDKECVYFCHLDIIWVNTPGQTAPYGLGNPPRRRRRSLPKRCECSSGRDPACATFCHRRPKPEAVVVPGSGPPPDVFQAGRARPSAGELLQQLRDISAAKSHFARRQQVAVRELRPTHSRRWKR.

An N-terminal signal peptide occupies residues 1-26 (MVAMPTAWCSIALALLLALHEGKGQV). Positions 27 to 46 (AAAPDQPAPSHRARASHLRP) are excised as a propeptide. Cystine bridges form between C49-C63 and C51-C59. Residues 70–178 (VNTPGQTAPY…RPTHSRRWKR (109 aa)) constitute a propeptide that is removed on maturation. The endothelin-like stretch occupies residues 96–111 (CECSSGRDPACATFCH).

It belongs to the endothelin/sarafotoxin family.

It localises to the secreted. Functionally, endothelins are endothelium-derived vasoconstrictor peptides. This chain is Endothelin-2 (EDN2), found in Felis catus (Cat).